The primary structure comprises 207 residues: Ribosomal RNA small subunit methyltransferase G (207 aa).

Residues glycine 75, methionine 80, 126–127 (VE), and arginine 141 contribute to the S-adenosyl-L-methionine site.

It belongs to the methyltransferase superfamily. RNA methyltransferase RsmG family.

Its subcellular location is the cytoplasm. The catalysed reaction is guanosine(527) in 16S rRNA + S-adenosyl-L-methionine = N(7)-methylguanosine(527) in 16S rRNA + S-adenosyl-L-homocysteine. Its function is as follows. Specifically methylates the N7 position of guanine in position 527 of 16S rRNA. This is Ribosomal RNA small subunit methyltransferase G from Laribacter hongkongensis (strain HLHK9).